A 430-amino-acid chain; its full sequence is tRNA(Ile)-lysidine synthase (430 aa).

27 to 32 (SGGSDS) serves as a coordination point for ATP.

This sequence belongs to the tRNA(Ile)-lysidine synthase family.

It is found in the cytoplasm. It carries out the reaction cytidine(34) in tRNA(Ile2) + L-lysine + ATP = lysidine(34) in tRNA(Ile2) + AMP + diphosphate + H(+). Ligates lysine onto the cytidine present at position 34 of the AUA codon-specific tRNA(Ile) that contains the anticodon CAU, in an ATP-dependent manner. Cytidine is converted to lysidine, thus changing the amino acid specificity of the tRNA from methionine to isoleucine. This chain is tRNA(Ile)-lysidine synthase, found in Rickettsia bellii (strain OSU 85-389).